We begin with the raw amino-acid sequence, 237 residues long: tRNA (guanine-N(7)-)-methyltransferase (237 aa).

Positions 67, 92, 119, and 142 each coordinate S-adenosyl-L-methionine. Asp142 is an active-site residue. Residues Lys146, Asp178, and 215–218 (TKFE) each bind substrate.

It belongs to the class I-like SAM-binding methyltransferase superfamily. TrmB family.

It carries out the reaction guanosine(46) in tRNA + S-adenosyl-L-methionine = N(7)-methylguanosine(46) in tRNA + S-adenosyl-L-homocysteine. Its pathway is tRNA modification; N(7)-methylguanine-tRNA biosynthesis. Functionally, catalyzes the formation of N(7)-methylguanine at position 46 (m7G46) in tRNA. The protein is tRNA (guanine-N(7)-)-methyltransferase of Aeromonas hydrophila subsp. hydrophila (strain ATCC 7966 / DSM 30187 / BCRC 13018 / CCUG 14551 / JCM 1027 / KCTC 2358 / NCIMB 9240 / NCTC 8049).